Here is a 511-residue protein sequence, read N- to C-terminus: MTGKRGTAAGTDGSGNKKGKREFKAKLSGLLAEQTCRDSVKEAWEGNQGGQFGSVALDSVPFPHGVIHPFIHNSDFLEELKEELLNLNFQPKSNDLYQFKQSEDLKNRKESHIKALRHVLFEDFRQWLSNITNVELEKTVDISCAQYGYTDTLLCHDDELEGRRFAFILYLVPEWSKSDGGSLDLYGMDDNGQPGPIVKSLVPRWNSLVFFEVSPVSFHQVSEVLSDGKCRLSVSGWFHGCSLERPPRGLDHPPVRSPHIPHDDQILYEWINPSYLSLESQAQIQEEFEERSEILLKDFLKADKFQAICAALETQSITLEKCGPPNKRCYDRAHGDFPGVIGSCMELLRSEAFFLFLSNFTGLKLHFLASNNEESDEGEGPSEPNTVSQQGASSEDDKVPSCSGELRHWQHSYYTMIHDLDPERHEFALDLLLFCGCDDWEAEYGGFTSYIAKEEDEELLTVYPENNCLALVYRDKETMRFVKHINHKSQQRDAKNTKHKGFWDFAFVYYE.

The tract at residues 1 to 20 is disordered; it reads MTGKRGTAAGTDGSGNKKGK. One can recognise a Fe2OG dioxygenase domain in the interval 138–240; it reads KTVDISCAQY…RLSVSGWFHG (103 aa). Residues histidine 156 and aspartate 158 each contribute to the Fe cation site. Position 170 (tyrosine 170) interacts with 2-oxoglutarate. Histidine 219 lines the Fe cation pocket. 2-oxoglutarate is bound at residue arginine 231. Residues 372–403 are disordered; that stretch reads NEESDEGEGPSEPNTVSQQGASSEDDKVPSCS.

It belongs to the TPA1 family. As to quaternary structure, monomer. It depends on Fe(2+) as a cofactor. The cofactor is L-ascorbate.

Its subcellular location is the cytoplasm. The protein localises to the nucleus. It carries out the reaction [ribosomal protein uS12]-L-proline + 2-oxoglutarate + O2 = [ribosomal protein uS12]-(3S)-3-hydroxy-L-proline + succinate + CO2. Its function is as follows. Prolyl 3-hydroxylase that catalyzes 3-hydroxylation of 'Pro-62' of small ribosomal subunit uS12 (rps23), thereby regulating protein translation termination efficiency. Involved in stress granule formation. The chain is Prolyl 3-hydroxylase OGFOD1 (ogfod1) from Xenopus laevis (African clawed frog).